Reading from the N-terminus, the 456-residue chain is tRNA modification GTPase MnmE (456 aa).

Residues Arg-24, Glu-81, and Lys-120 each contribute to the (6S)-5-formyl-5,6,7,8-tetrahydrofolate site. The TrmE-type G domain occupies 216 to 379 (GMTVVIAGRP…LRDHLKACMG (164 aa)). Asn-226 contacts K(+). Residues 226 to 231 (NAGKSS), 245 to 251 (TDIAGTT), 270 to 273 (DTAG), and 335 to 338 (NKAD) each bind GTP. A Mg(2+)-binding site is contributed by Ser-230. Residues Thr-245, Ile-247, and Thr-250 each contribute to the K(+) site. Residue Thr-251 participates in Mg(2+) binding. (6S)-5-formyl-5,6,7,8-tetrahydrofolate is bound at residue Lys-456.

This sequence belongs to the TRAFAC class TrmE-Era-EngA-EngB-Septin-like GTPase superfamily. TrmE GTPase family. Homodimer. Heterotetramer of two MnmE and two MnmG subunits. It depends on K(+) as a cofactor.

The protein resides in the cytoplasm. Exhibits a very high intrinsic GTPase hydrolysis rate. Involved in the addition of a carboxymethylaminomethyl (cmnm) group at the wobble position (U34) of certain tRNAs, forming tRNA-cmnm(5)s(2)U34. This chain is tRNA modification GTPase MnmE, found in Pseudomonas putida (strain GB-1).